A 1316-amino-acid chain; its full sequence is DNA-directed RNA polymerase subunit beta' (1316 aa).

Positions 60, 62, 75, and 78 each coordinate Zn(2+). Mg(2+) is bound by residues Asp535, Asp537, and Asp539. Positions 891, 968, 975, and 978 each coordinate Zn(2+).

This sequence belongs to the RNA polymerase beta' chain family. The RNAP catalytic core consists of 2 alpha, 1 beta, 1 beta' and 1 omega subunit. When a sigma factor is associated with the core the holoenzyme is formed, which can initiate transcription. Requires Mg(2+) as cofactor. The cofactor is Zn(2+).

The enzyme catalyses RNA(n) + a ribonucleoside 5'-triphosphate = RNA(n+1) + diphosphate. In terms of biological role, DNA-dependent RNA polymerase catalyzes the transcription of DNA into RNA using the four ribonucleoside triphosphates as substrates. The protein is DNA-directed RNA polymerase subunit beta' of Mycobacterium bovis (strain BCG / Pasteur 1173P2).